The chain runs to 410 residues: D-3-phosphoglycerate dehydrogenase (410 aa).

NAD(+)-binding positions include 161–162 (HI), D181, 238–240 (ASR), and D264. R240 is an active-site residue. The active site involves E269. H292 functions as the Proton donor in the catalytic mechanism. NAD(+) is bound at residue 292–295 (HIGG). An ACT domain is found at 339 to 410 (RLMHIHENRP…PGTIRARLLY (72 aa)).

This sequence belongs to the D-isomer specific 2-hydroxyacid dehydrogenase family. Homotetramer.

The enzyme catalyses (2R)-3-phosphoglycerate + NAD(+) = 3-phosphooxypyruvate + NADH + H(+). It carries out the reaction (R)-2-hydroxyglutarate + NAD(+) = 2-oxoglutarate + NADH + H(+). The protein operates within amino-acid biosynthesis; L-serine biosynthesis; L-serine from 3-phospho-D-glycerate: step 1/3. In bacteria displays feedback inhibition by L-serine. In terms of biological role, catalyzes the reversible oxidation of 3-phospho-D-glycerate to 3-phosphonooxypyruvate, the first step of the phosphorylated L-serine biosynthesis pathway. Also catalyzes the reversible oxidation of 2-hydroxyglutarate to 2-oxoglutarate. The sequence is that of D-3-phosphoglycerate dehydrogenase (serA) from Escherichia coli O6:H1 (strain CFT073 / ATCC 700928 / UPEC).